We begin with the raw amino-acid sequence, 152 residues long: Anaerobic nitrite reductase SYMA (152 aa).

Residues 2–151 form the Globin domain; that stretch reads ALTERQEALL…LVATIKAEMK (150 aa). The Homodimerization motif lies at 35–39; that stretch reads EAAPE. Residues serine 45, lysine 59, histidine 63, arginine 93, and histidine 98 each coordinate heme b. Positions 105 to 117 match the Homodimerization motif; that stretch reads DPHFEVMKGALLG.

Belongs to the plant globin family. Homodimer. Heme b is required as a cofactor. As to expression, root nodules.

It is found in the cytoplasm. It localises to the nucleus. It catalyses the reaction Fe(III)-heme b-[protein] + nitric oxide + H2O = Fe(II)-heme b-[protein] + nitrite + 2 H(+). Phytoglobin that reduces nitrite to nitric oxide (NO) under anoxic conditions (e.g. during flooding or in waterlogged soil) and upon root nodulation. Required for general plant development and during nodulation, especially for the onset of symbiosis. Monitors nitric oxide (NO) levels during early phase of the nitrogen-fixing symbiosis and buffers oxygen in functioning nodules. May not function as an oxygen storage or transport protein. Has an unusually high affinity for O(2) through a hexacoordinate heme iron because of a very low dissociation constant. The protein is Anaerobic nitrite reductase SYMA of Casuarina glauca (Swamp oak).